Here is a 122-residue protein sequence, read N- to C-terminus: Large ribosomal subunit protein uL14 (122 aa).

The protein belongs to the universal ribosomal protein uL14 family. Part of the 50S ribosomal subunit. Forms a cluster with proteins L3 and L19. In the 70S ribosome, L14 and L19 interact and together make contacts with the 16S rRNA in bridges B5 and B8.

Its function is as follows. Binds to 23S rRNA. Forms part of two intersubunit bridges in the 70S ribosome. The polypeptide is Large ribosomal subunit protein uL14 (Desulfotalea psychrophila (strain LSv54 / DSM 12343)).